Here is a 410-residue protein sequence, read N- to C-terminus: Arginine deiminase (410 aa).

C400 functions as the Amidino-cysteine intermediate in the catalytic mechanism.

It belongs to the arginine deiminase family.

It is found in the cytoplasm. The enzyme catalyses L-arginine + H2O = L-citrulline + NH4(+). It participates in amino-acid degradation; L-arginine degradation via ADI pathway; carbamoyl phosphate from L-arginine: step 1/2. In Streptococcus uberis (strain ATCC BAA-854 / 0140J), this protein is Arginine deiminase.